The primary structure comprises 80 residues: Exodeoxyribonuclease 7 small subunit (80 aa).

Belongs to the XseB family. Heterooligomer composed of large and small subunits.

The protein resides in the cytoplasm. It carries out the reaction Exonucleolytic cleavage in either 5'- to 3'- or 3'- to 5'-direction to yield nucleoside 5'-phosphates.. Its function is as follows. Bidirectionally degrades single-stranded DNA into large acid-insoluble oligonucleotides, which are then degraded further into small acid-soluble oligonucleotides. The polypeptide is Exodeoxyribonuclease 7 small subunit (Pseudomonas fluorescens (strain ATCC BAA-477 / NRRL B-23932 / Pf-5)).